Here is a 212-residue protein sequence, read N- to C-terminus: Large ribosomal subunit protein uL3 (212 aa).

Q152 bears the N5-methylglutamine mark.

This sequence belongs to the universal ribosomal protein uL3 family. As to quaternary structure, part of the 50S ribosomal subunit. Forms a cluster with proteins L14 and L19. Methylated by PrmB.

In terms of biological role, one of the primary rRNA binding proteins, it binds directly near the 3'-end of the 23S rRNA, where it nucleates assembly of the 50S subunit. This is Large ribosomal subunit protein uL3 from Chromohalobacter salexigens (strain ATCC BAA-138 / DSM 3043 / CIP 106854 / NCIMB 13768 / 1H11).